The chain runs to 329 residues: DNA-directed RNA polymerase subunit alpha (329 aa).

Positions 1 to 235 (MQNSIMDFLR…EQLEAFVDLR (235 aa)) are alpha N-terminal domain (alpha-NTD). The tract at residues 249–329 (FEPILLRPVD…NWPPSSILDE (81 aa)) is alpha C-terminal domain (alpha-CTD).

It belongs to the RNA polymerase alpha chain family. In terms of assembly, homodimer. The RNAP catalytic core consists of 2 alpha, 1 beta, 1 beta' and 1 omega subunit. When a sigma factor is associated with the core the holoenzyme is formed, which can initiate transcription.

The catalysed reaction is RNA(n) + a ribonucleoside 5'-triphosphate = RNA(n+1) + diphosphate. DNA-dependent RNA polymerase catalyzes the transcription of DNA into RNA using the four ribonucleoside triphosphates as substrates. The chain is DNA-directed RNA polymerase subunit alpha from Buchnera aphidicola subsp. Acyrthosiphon pisum (strain APS) (Acyrthosiphon pisum symbiotic bacterium).